Consider the following 776-residue polypeptide: 1,4-alpha-glucan branching enzyme GlgB (776 aa).

The active-site Nucleophile is aspartate 431. Catalysis depends on glutamate 484, which acts as the Proton donor.

It belongs to the glycosyl hydrolase 13 family. GlgB subfamily. In terms of assembly, monomer.

It carries out the reaction Transfers a segment of a (1-&gt;4)-alpha-D-glucan chain to a primary hydroxy group in a similar glucan chain.. It functions in the pathway glycan biosynthesis; glycogen biosynthesis. Functionally, catalyzes the formation of the alpha-1,6-glucosidic linkages in glycogen by scission of a 1,4-alpha-linked oligosaccharide from growing alpha-1,4-glucan chains and the subsequent attachment of the oligosaccharide to the alpha-1,6 position. This chain is 1,4-alpha-glucan branching enzyme GlgB, found in Trichodesmium erythraeum (strain IMS101).